The chain runs to 165 residues: WSXSGDDDDDDGDSGDDDDDDGDDDSDDDNDADDDSGAEDDNDDDSGDENEDDTDDSGDDVKMIKPTTVMTGWMMTIADESSDDDNERDDTSDDSVGDDAYNDDSQAGELNSDSTYYDQLRSQGDVQSQQGFKNLQSYSNGFKVSSGLVATVVSTLACLFLTNLH.

Composition is skewed to acidic residues over residues 1 to 58 and 80 to 102; these read WSXS…DDSG and ESSDDDNERDDTSDDSVGDDAYN. The tract at residues 1 to 112 is disordered; it reads WSXSGDDDDD…DDSQAGELNS (112 aa). A compositionally biased stretch (polar residues) spans 103–112; sequence DDSQAGELNS.

As to expression, component of the acid-insoluble and acid-soluble organic matrix of the aragonitic skeleton (at protein level).

It is found in the secreted. This chain is Secreted acidic protein 2, found in Acropora millepora (Staghorn coral).